Reading from the N-terminus, the 236-residue chain is Small ribosomal subunit protein uS2c (236 aa).

This sequence belongs to the universal ribosomal protein uS2 family.

The protein localises to the plastid. This is Small ribosomal subunit protein uS2c (rps2) from Cuscuta gronovii (Common dodder).